A 515-amino-acid polypeptide reads, in one-letter code: Fibril protein (515 aa).

Residue Met1 is modified to Blocked amino end (Met). 4 helical regions span residues 21–34 (VKKY…IQHV), 206–228 (HKFK…FNLL), 357–376 (KIET…AEKC), and 426–440 (SNEF…LKDV).

The protein localises to the cytoplasm. The protein resides in the cytoskeleton. Acts as a cytoskeletal structure involved in the shape and motility of spiroplasmas. The chain is Fibril protein from Spiroplasma citri.